A 421-amino-acid chain; its full sequence is UDP-N-acetylglucosamine 1-carboxyvinyltransferase (421 aa).

22–23 (KN) serves as a coordination point for phosphoenolpyruvate. A UDP-N-acetyl-alpha-D-glucosamine-binding site is contributed by arginine 93. Catalysis depends on cysteine 117, which acts as the Proton donor. At cysteine 117 the chain carries 2-(S-cysteinyl)pyruvic acid O-phosphothioketal. UDP-N-acetyl-alpha-D-glucosamine-binding positions include 122 to 126 (RPVDL), aspartate 308, and isoleucine 330.

This sequence belongs to the EPSP synthase family. MurA subfamily.

The protein localises to the cytoplasm. It carries out the reaction phosphoenolpyruvate + UDP-N-acetyl-alpha-D-glucosamine = UDP-N-acetyl-3-O-(1-carboxyvinyl)-alpha-D-glucosamine + phosphate. It participates in cell wall biogenesis; peptidoglycan biosynthesis. In terms of biological role, cell wall formation. Adds enolpyruvyl to UDP-N-acetylglucosamine. The protein is UDP-N-acetylglucosamine 1-carboxyvinyltransferase of Pseudomonas putida (strain ATCC 700007 / DSM 6899 / JCM 31910 / BCRC 17059 / LMG 24140 / F1).